We begin with the raw amino-acid sequence, 750 residues long: Photosystem I P700 chlorophyll a apoprotein A1 (750 aa).

Transmembrane regions (helical) follow at residues 70–93, 156–179, 195–219, 291–309, 346–369, 385–411, 433–455, and 531–549; these read VFSA…FHGA, LYTT…FHYH, LNHH…HVSL, TAHH…GHMY, WHAQ…HHMY, LSLF…IFMV, AIIS…LYIH, and FLVH…LILL. [4Fe-4S] cluster contacts are provided by cysteine 573 and cysteine 582. 2 helical membrane-spanning segments follow: residues 589–610 and 664–686; these read HVFL…HFSW and LSAY…MFLF. Histidine 675 lines the chlorophyll a' pocket. The chlorophyll a site is built by methionine 683 and tyrosine 691. Tryptophan 692 serves as a coordination point for phylloquinone. A helical transmembrane segment spans residues 724-744; it reads AVGVAHYLLGGIATTWAFFLA.

The protein belongs to the PsaA/PsaB family. The PsaA/B heterodimer binds the P700 chlorophyll special pair and subsequent electron acceptors. PSI consists of a core antenna complex that captures photons, and an electron transfer chain that converts photonic excitation into a charge separation. The eukaryotic PSI reaction center is composed of at least 11 subunits. It depends on P700 is a chlorophyll a/chlorophyll a' dimer, A0 is one or more chlorophyll a, A1 is one or both phylloquinones and FX is a shared 4Fe-4S iron-sulfur center. as a cofactor.

The protein localises to the plastid. It localises to the chloroplast thylakoid membrane. The catalysed reaction is reduced [plastocyanin] + hnu + oxidized [2Fe-2S]-[ferredoxin] = oxidized [plastocyanin] + reduced [2Fe-2S]-[ferredoxin]. Its function is as follows. PsaA and PsaB bind P700, the primary electron donor of photosystem I (PSI), as well as the electron acceptors A0, A1 and FX. PSI is a plastocyanin-ferredoxin oxidoreductase, converting photonic excitation into a charge separation, which transfers an electron from the donor P700 chlorophyll pair to the spectroscopically characterized acceptors A0, A1, FX, FA and FB in turn. Oxidized P700 is reduced on the lumenal side of the thylakoid membrane by plastocyanin. This Physcomitrium patens (Spreading-leaved earth moss) protein is Photosystem I P700 chlorophyll a apoprotein A1.